Reading from the N-terminus, the 490-residue chain is Tryptophan decarboxylase (490 aa).

An N6-(pyridoxal phosphate)lysine modification is found at lysine 306.

This sequence belongs to the group II decarboxylase family. In terms of assembly, homodimer. It depends on pyridoxal 5'-phosphate as a cofactor.

It is found in the cytoplasm. It catalyses the reaction L-tryptophan + H(+) = tryptamine + CO2. Inhibited by (S)-alpha-fluoromethyltryptophan. In terms of biological role, catalyzes the decarboxylation of tryptophan to tryptamine. Tryptamine is a neurotransmitter that induces the release of serotonin, which is suggested to modulate gastrointestinal motility. Therefore, the tryptophan decarboxylase from the gut bacteria Ruminococcus gnavus (strain ATCC 29149 / VPI C7-9) may influence host brain and behavior. Has weak activity with tyrosine and phenylalanine. This is Tryptophan decarboxylase from Mediterraneibacter gnavus (strain ATCC 29149 / DSM 114966 / JCM 6515 / VPI C7-9) (Ruminococcus gnavus).